The primary structure comprises 273 residues: Putative pyruvate, phosphate dikinase regulatory protein 2 (273 aa).

G151–T158 lines the ADP pocket.

The protein belongs to the pyruvate, phosphate/water dikinase regulatory protein family. PDRP subfamily.

The catalysed reaction is N(tele)-phospho-L-histidyl/L-threonyl-[pyruvate, phosphate dikinase] + ADP = N(tele)-phospho-L-histidyl/O-phospho-L-threonyl-[pyruvate, phosphate dikinase] + AMP + H(+). It carries out the reaction N(tele)-phospho-L-histidyl/O-phospho-L-threonyl-[pyruvate, phosphate dikinase] + phosphate + H(+) = N(tele)-phospho-L-histidyl/L-threonyl-[pyruvate, phosphate dikinase] + diphosphate. Functionally, bifunctional serine/threonine kinase and phosphorylase involved in the regulation of the pyruvate, phosphate dikinase (PPDK) by catalyzing its phosphorylation/dephosphorylation. The protein is Putative pyruvate, phosphate dikinase regulatory protein 2 of Staphylococcus saprophyticus subsp. saprophyticus (strain ATCC 15305 / DSM 20229 / NCIMB 8711 / NCTC 7292 / S-41).